The sequence spans 384 residues: Anhydro-N-acetylmuramic acid kinase (384 aa).

Residue 12–19 coordinates ATP; that stretch reads GTSLDGVD.

It belongs to the anhydro-N-acetylmuramic acid kinase family.

The catalysed reaction is 1,6-anhydro-N-acetyl-beta-muramate + ATP + H2O = N-acetyl-D-muramate 6-phosphate + ADP + H(+). Its pathway is amino-sugar metabolism; 1,6-anhydro-N-acetylmuramate degradation. It participates in cell wall biogenesis; peptidoglycan recycling. Its function is as follows. Catalyzes the specific phosphorylation of 1,6-anhydro-N-acetylmuramic acid (anhMurNAc) with the simultaneous cleavage of the 1,6-anhydro ring, generating MurNAc-6-P. Is required for the utilization of anhMurNAc either imported from the medium or derived from its own cell wall murein, and thus plays a role in cell wall recycling. This chain is Anhydro-N-acetylmuramic acid kinase, found in Cronobacter sakazakii (strain ATCC BAA-894) (Enterobacter sakazakii).